The following is a 270-amino-acid chain: MNWIGKLIGMMLGFILAGPIGLIIGLFIGHVVFDQGRFRQWFQTTASARSQPSKIQEVFFNTTFRVMGFVAKADGRVSENEIRQARQVMQQMNLDDSMKREAIRLFTEGKQPNFNLDESLNELRQACVFQPALLRVFLEIQIQMASADGQGLSGQKRQVLQTICRRLEVFGFDYNQFEQRFRAEQNYQRYQQRATQDPRAYLNDAYKVLGLTSAATDSEIKKSYRRLMSQHHPDKLMAKGLPPEMMKMATQKTQQIKKAYEQIRKVRSMV.

The Periplasmic segment spans residues 1–6; it reads MNWIGK. A helical membrane pass occupies residues 7–30; it reads LIGMMLGFILAGPIGLIIGLFIGH. The Cytoplasmic segment spans residues 31–270; sequence VVFDQGRFRQ…EQIRKVRSMV (240 aa). One can recognise a J domain in the interval 204-270; sequence DAYKVLGLTS…EQIRKVRSMV (67 aa).

As to quaternary structure, homodimer.

Its subcellular location is the cell inner membrane. In terms of biological role, regulatory DnaK co-chaperone. Direct interaction between DnaK and DjlA is needed for the induction of the wcaABCDE operon, involved in the synthesis of a colanic acid polysaccharide capsule, possibly through activation of the RcsB/RcsC phosphotransfer signaling pathway. The colanic acid capsule may help the bacterium survive conditions outside the host. In Coxiella burnetii (strain RSA 493 / Nine Mile phase I), this protein is Co-chaperone protein DjlA.